A 145-amino-acid polypeptide reads, in one-letter code: Large ribosomal subunit protein uL13 (145 aa).

The protein belongs to the universal ribosomal protein uL13 family. As to quaternary structure, part of the 50S ribosomal subunit.

Its function is as follows. This protein is one of the early assembly proteins of the 50S ribosomal subunit, although it is not seen to bind rRNA by itself. It is important during the early stages of 50S assembly. In Staphylococcus aureus (strain Mu3 / ATCC 700698), this protein is Large ribosomal subunit protein uL13.